Reading from the N-terminus, the 353-residue chain is Probable dual-specificity RNA methyltransferase RlmN (353 aa).

Glu104 serves as the catalytic Proton acceptor. In terms of domain architecture, Radical SAM core spans Asp112 to Asp341. A disulfide bridge connects residues Cys119 and Cys346. Cys126, Cys130, and Cys133 together coordinate [4Fe-4S] cluster. S-adenosyl-L-methionine is bound by residues Gly173–Glu174, Ser205, Ser228–Asn230, and Asn304. Catalysis depends on Cys346, which acts as the S-methylcysteine intermediate.

The protein belongs to the radical SAM superfamily. RlmN family. Requires [4Fe-4S] cluster as cofactor.

It is found in the cytoplasm. It catalyses the reaction adenosine(2503) in 23S rRNA + 2 reduced [2Fe-2S]-[ferredoxin] + 2 S-adenosyl-L-methionine = 2-methyladenosine(2503) in 23S rRNA + 5'-deoxyadenosine + L-methionine + 2 oxidized [2Fe-2S]-[ferredoxin] + S-adenosyl-L-homocysteine. The catalysed reaction is adenosine(37) in tRNA + 2 reduced [2Fe-2S]-[ferredoxin] + 2 S-adenosyl-L-methionine = 2-methyladenosine(37) in tRNA + 5'-deoxyadenosine + L-methionine + 2 oxidized [2Fe-2S]-[ferredoxin] + S-adenosyl-L-homocysteine. In terms of biological role, specifically methylates position 2 of adenine 2503 in 23S rRNA and position 2 of adenine 37 in tRNAs. The polypeptide is Probable dual-specificity RNA methyltransferase RlmN (Leptospira interrogans serogroup Icterohaemorrhagiae serovar Lai (strain 56601)).